The chain runs to 243 residues: Pyridoxine 5'-phosphate synthase (243 aa).

Asn-7 contacts 3-amino-2-oxopropyl phosphate. A 1-deoxy-D-xylulose 5-phosphate-binding site is contributed by 9–10; the sequence is DH. Arg-18 contributes to the 3-amino-2-oxopropyl phosphate binding site. His-43 serves as the catalytic Proton acceptor. 1-deoxy-D-xylulose 5-phosphate contacts are provided by Arg-45 and His-50. Glu-70 (proton acceptor) is an active-site residue. Thr-100 serves as a coordination point for 1-deoxy-D-xylulose 5-phosphate. The active-site Proton donor is the His-192. 3-amino-2-oxopropyl phosphate is bound by residues Gly-193 and 215–216; that span reads GF.

Belongs to the PNP synthase family. In terms of assembly, homooctamer; tetramer of dimers.

The protein resides in the cytoplasm. The enzyme catalyses 3-amino-2-oxopropyl phosphate + 1-deoxy-D-xylulose 5-phosphate = pyridoxine 5'-phosphate + phosphate + 2 H2O + H(+). Its pathway is cofactor biosynthesis; pyridoxine 5'-phosphate biosynthesis; pyridoxine 5'-phosphate from D-erythrose 4-phosphate: step 5/5. In terms of biological role, catalyzes the complicated ring closure reaction between the two acyclic compounds 1-deoxy-D-xylulose-5-phosphate (DXP) and 3-amino-2-oxopropyl phosphate (1-amino-acetone-3-phosphate or AAP) to form pyridoxine 5'-phosphate (PNP) and inorganic phosphate. The chain is Pyridoxine 5'-phosphate synthase from Salinibacter ruber (strain DSM 13855 / M31).